A 746-amino-acid polypeptide reads, in one-letter code: MQAKKRYFILLSAGSCLALLFYFGGVQFRASRSHSRREEHSGRNGLHQPSPDHFWPRFPDALRPFFPWDQLENEDSSVHISPRQKRDANSSIYKGKKCRMESCFDFTLCKKNGFKVYVYPQQKGEKIAESYQNILAAIEGSRFYTSDPSQACLFVLSLDTLDRDQLSPQYVHNLRSKVQSLHLWNNGRNHLIFNLYSGTWPDYTEDVGFDIGQAMLAKASISTENFRPNFDVSIPLFSKDHPRTGGERGFLKFNTIPPLRKYMLVFKGKRYLTGIGSDTRNALYHVHNGEDVLLLTTCKHGKDWQKHKDSRCDRDNTEYEKYDYREMLHNATFCLVPRGRRLGSFRFLEALQAACVPVMLSNGWELPFSEVINWNQAAVIGDERLLLQIPSTIRSIHQDKILALRQQTQFLWEAYFSSVEKIVLTTLEIIQDRIFKHISRNSLIWNKHPGGLFVLPQYSSYLGDFPYYYANLGLKPPSKFTAVIHAVTPLVSQSQPVLKLLVAAAKSQYCAQIIVLWNCDKPLPAKHRWPATAVPVIVIEGESKVMSSRFLPYDNIITDAVLSLDEDTVLSTTEVDFAFTVWQSFPERIVGYPARSHFWDNSKERWGYTSKWTNDYSMVLTGAAIYHKYYHYLYSHYLPASLKNMVDQLANCEDILMNFLVSAVTKLPPIKVTQKKQYKETMMGQTSRASRWADPDHFAQRQSCMNTFASWFGYMPLIHSQMRLDPVLFKDQVSILRKKYRDIERL.

Residues 1 to 7 (MQAKKRY) are Cytoplasmic-facing. A helical; Signal-anchor for type II membrane protein membrane pass occupies residues 8-28 (FILLSAGSCLALLFYFGGVQF). Residues 29-746 (RASRSHSRRE…RKKYRDIERL (718 aa)) lie on the Lumenal side of the membrane. Asparagine 89 is a glycosylation site (N-linked (GlcNAc...) asparagine). Disulfide bonds link cysteine 98–cysteine 103 and cysteine 109–cysteine 152. 2 residues coordinate a protein: leucine 166 and tyrosine 203. Lysine 267, lysine 269, tyrosine 271, and arginine 280 together coordinate UDP. The cysteines at positions 298 and 312 are disulfide-linked. Histidine 300 contributes to the a protein binding site. Tyrosine 319 and tyrosine 324 together coordinate UDP. Asparagine 330 carries an N-linked (GlcNAc...) asparagine glycan. Cystine bridges form between cysteine 334–cysteine 355 and cysteine 652–cysteine 704. Residues arginine 346 and glutamate 349 each contribute to the UDP site.

Belongs to the glycosyltransferase 47 family. In terms of assembly, part of the heparan sulfate polymerase, a dimeric complex composed of EXT1 and EXT2. Could also form homooligomeric complexes. Interacts with NDST1. N-glycosylated.

It is found in the golgi apparatus membrane. It localises to the golgi apparatus. The protein localises to the cis-Golgi network membrane. The protein resides in the endoplasmic reticulum membrane. The enzyme catalyses 3-O-{alpha-D-GlcNAc-[(1-&gt;4)-beta-D-GlcA-(1-&gt;4)-alpha-D-GlcNAc](n)-(1-&gt;4)-beta-D-GlcA-(1-&gt;3)-beta-D-Gal-(1-&gt;3)-beta-D-Gal-(1-&gt;4)-beta-D-Xyl}-L-seryl-[protein] + UDP-alpha-D-glucuronate = 3-O-{[(1-&gt;4)-beta-D-GlcA-(1-&gt;4)-alpha-D-GlcNAc](n+1)-(1-&gt;4)-beta-D-GlcA-(1-&gt;3)-beta-D-Gal-(1-&gt;3)-beta-D-Gal-(1-&gt;4)-beta-D-Xyl}-L-seryl-[protein] + UDP + H(+). It functions in the pathway protein modification; protein glycosylation. Glycosyltransferase forming with EXT2 the heterodimeric heparan sulfate polymerase which catalyzes the elongation of the heparan sulfate glycan backbone. Glycan backbone extension consists in the alternating transfer of (1-&gt;4)-beta-D-GlcA and (1-&gt;4)-alpha-D-GlcNAc residues from their respective UDP-sugar donors. Both EXT1 and EXT2 are required for the full activity of the polymerase since EXT1 bears the N-acetylglucosaminyl-proteoglycan 4-beta-glucuronosyltransferase activity within the complex while EXT2 carries the glucuronosyl-N-acetylglucosaminyl-proteoglycan 4-alpha-N-acetylglucosaminyltransferase activity. Heparan sulfate proteoglycans are ubiquitous components of the extracellular matrix and play an important role in tissue homeostasis and signaling. The protein is Exostosin-1 of Mus musculus (Mouse).